Reading from the N-terminus, the 429-residue chain is 3-phosphoshikimate 1-carboxyvinyltransferase (429 aa).

Residues Lys23, Ser24, and Arg28 each coordinate 3-phosphoshikimate. Lys23 contributes to the phosphoenolpyruvate binding site. Phosphoenolpyruvate contacts are provided by Gly95 and Arg123. The 3-phosphoshikimate site is built by Ser168, Gln170, Asp316, and Lys343. Gln170 provides a ligand contact to phosphoenolpyruvate. Catalysis depends on Asp316, which acts as the Proton acceptor. Residues Arg347 and Arg389 each contribute to the phosphoenolpyruvate site.

This sequence belongs to the EPSP synthase family. As to quaternary structure, monomer.

It localises to the cytoplasm. It catalyses the reaction 3-phosphoshikimate + phosphoenolpyruvate = 5-O-(1-carboxyvinyl)-3-phosphoshikimate + phosphate. It participates in metabolic intermediate biosynthesis; chorismate biosynthesis; chorismate from D-erythrose 4-phosphate and phosphoenolpyruvate: step 6/7. Its function is as follows. Catalyzes the transfer of the enolpyruvyl moiety of phosphoenolpyruvate (PEP) to the 5-hydroxyl of shikimate-3-phosphate (S3P) to produce enolpyruvyl shikimate-3-phosphate and inorganic phosphate. The polypeptide is 3-phosphoshikimate 1-carboxyvinyltransferase (Bacillus cereus (strain AH187)).